We begin with the raw amino-acid sequence, 360 residues long: Dihydroorotate dehydrogenase (quinone) (360 aa).

Residues 66-70 (AGFDK) and threonine 90 each bind FMN. Residue lysine 70 coordinates substrate. 115–119 (NRMGF) is a binding site for substrate. The FMN site is built by asparagine 143 and asparagine 176. Asparagine 176 is a substrate binding site. Residue serine 179 is the Nucleophile of the active site. A substrate-binding site is contributed by asparagine 181. Positions 212 and 240 each coordinate FMN. 241–242 (NT) contributes to the substrate binding site. FMN-binding positions include glycine 264, glycine 293, and 314–315 (YT).

This sequence belongs to the dihydroorotate dehydrogenase family. Type 2 subfamily. In terms of assembly, monomer. FMN is required as a cofactor.

It is found in the cell membrane. The enzyme catalyses (S)-dihydroorotate + a quinone = orotate + a quinol. The protein operates within pyrimidine metabolism; UMP biosynthesis via de novo pathway; orotate from (S)-dihydroorotate (quinone route): step 1/1. Its function is as follows. Catalyzes the conversion of dihydroorotate to orotate with quinone as electron acceptor. The polypeptide is Dihydroorotate dehydrogenase (quinone) (Mycobacterium ulcerans (strain Agy99)).